The following is a 576-amino-acid chain: Putative export ATP-binding/permease protein RF_0214 (576 aa).

An ABC transmembrane type-1 domain is found at 20-303; sequence LIIVMISLLS…IFELLSEIHL (284 aa). A run of 6 helical transmembrane segments spans residues 21–41, 61–81, 135–155, 158–178, 242–262, and 277–297; these read IIVM…GSVF, ILYI…RSYF, FLSF…LMFF, FKLA…LIKF, ALFF…VVWI, and IISF…IFEL. One can recognise an ABC transporter domain in the interval 336–572; that stretch reads IEFKNVDFTY…SEIYRNICRE (237 aa). 371–378 contributes to the ATP binding site; that stretch reads GRSGGGKS.

This sequence belongs to the ABC transporter superfamily. As to quaternary structure, homodimer.

Its subcellular location is the cell inner membrane. Its function is as follows. Part of an ABC transporter complex. Transmembrane domains (TMD) form a pore in the inner membrane and the ATP-binding domain (NBD) is responsible for energy generation. The polypeptide is Putative export ATP-binding/permease protein RF_0214 (Rickettsia felis (strain ATCC VR-1525 / URRWXCal2) (Rickettsia azadi)).